A 690-amino-acid chain; its full sequence is Elongation factor G (690 aa).

The 275-residue stretch at Glu-8–Leu-282 folds into the tr-type G domain. GTP contacts are provided by residues Ala-17–Thr-24, Asp-81–His-85, and Asn-135–Asp-138.

It belongs to the TRAFAC class translation factor GTPase superfamily. Classic translation factor GTPase family. EF-G/EF-2 subfamily.

It is found in the cytoplasm. In terms of biological role, catalyzes the GTP-dependent ribosomal translocation step during translation elongation. During this step, the ribosome changes from the pre-translocational (PRE) to the post-translocational (POST) state as the newly formed A-site-bound peptidyl-tRNA and P-site-bound deacylated tRNA move to the P and E sites, respectively. Catalyzes the coordinated movement of the two tRNA molecules, the mRNA and conformational changes in the ribosome. In Alkaliphilus oremlandii (strain OhILAs) (Clostridium oremlandii (strain OhILAs)), this protein is Elongation factor G.